We begin with the raw amino-acid sequence, 279 residues long: D-aminoacyl-tRNA deacylase (279 aa).

The tract at residues 81-100 (GRKSLTVHHPGNPTEDNSLG) is disordered.

Belongs to the DtdA deacylase family. As to quaternary structure, monomer. Requires Zn(2+) as cofactor.

The catalysed reaction is a D-aminoacyl-tRNA + H2O = a tRNA + a D-alpha-amino acid + H(+). The enzyme catalyses glycyl-tRNA(Ala) + H2O = tRNA(Ala) + glycine + H(+). Functionally, D-aminoacyl-tRNA deacylase with broad substrate specificity. By recycling D-aminoacyl-tRNA to D-amino acids and free tRNA molecules, this enzyme counteracts the toxicity associated with the formation of D-aminoacyl-tRNA entities in vivo. The protein is D-aminoacyl-tRNA deacylase of Aeropyrum pernix (strain ATCC 700893 / DSM 11879 / JCM 9820 / NBRC 100138 / K1).